The chain runs to 105 residues: Large ribosomal subunit protein bL34m (105 aa).

The transit peptide at 1-16 (MPLFARLCQPQSRRMF) directs the protein to the mitochondrion.

This sequence belongs to the bacterial ribosomal protein bL34 family. In terms of assembly, component of the mitochondrial large ribosomal subunit (mt-LSU). Mature yeast 74S mitochondrial ribosomes consist of a small (37S) and a large (54S) subunit. The 37S small subunit contains a 15S ribosomal RNA (15S mt-rRNA) and 34 different proteins. The 54S large subunit contains a 21S rRNA (21S mt-rRNA) and 46 different proteins.

It is found in the mitochondrion. Functionally, component of the mitochondrial ribosome (mitoribosome), a dedicated translation machinery responsible for the synthesis of mitochondrial genome-encoded proteins, including at least some of the essential transmembrane subunits of the mitochondrial respiratory chain. The mitoribosomes are attached to the mitochondrial inner membrane and translation products are cotranslationally integrated into the membrane. The chain is Large ribosomal subunit protein bL34m from Saccharomyces cerevisiae (strain ATCC 204508 / S288c) (Baker's yeast).